A 254-amino-acid polypeptide reads, in one-letter code: Undecaprenyl-diphosphatase (254 aa).

8 helical membrane-spanning segments follow: residues 1–21, 41–61, 75–95, 96–116, 130–150, 174–194, 210–230, and 234–254; these read MGII…FLPV, AHKA…VFLY, LIIA…IIKG, LFSP…FIAV, ILKI…IAMI, AEFS…YDIM, TGFV…IGFV, and NFVP…LFVL.

This sequence belongs to the UppP family.

The protein localises to the cell inner membrane. It carries out the reaction di-trans,octa-cis-undecaprenyl diphosphate + H2O = di-trans,octa-cis-undecaprenyl phosphate + phosphate + H(+). In terms of biological role, catalyzes the dephosphorylation of undecaprenyl diphosphate (UPP). Confers resistance to bacitracin. This Persephonella marina (strain DSM 14350 / EX-H1) protein is Undecaprenyl-diphosphatase.